Consider the following 108-residue polypeptide: PTS system galactose-specific EIIB component (108 aa).

The 106-residue stretch at 3–108 (DKVIALACAA…VLAAAENLMN (106 aa)) folds into the PTS EIIB type-3 domain. The Phosphocysteine intermediate role is filled by C10. C10 bears the Phosphocysteine; by EIIA mark.

It carries out the reaction N(pros)-phospho-L-histidyl-[protein] + D-galactose(out) = D-galactose 6-phosphate(in) + L-histidyl-[protein]. In terms of biological role, the phosphoenolpyruvate-dependent sugar phosphotransferase system (sugar PTS), a major carbohydrate active transport system, catalyzes the phosphorylation of incoming sugar substrates concomitantly with their translocation across the cell membrane. Involved in galactose transport with PtcA and Lmg_0963. This Lactococcus lactis subsp. cremoris (strain MG1363) protein is PTS system galactose-specific EIIB component.